The following is a 152-amino-acid chain: Nucleoside diphosphate kinase B (152 aa).

The interaction with AKAP13 stretch occupies residues 1 to 66 (MANLERTFIA…DRPFFPGLVK (66 aa)). Positions 12, 60, 88, 94, 105, and 115 each coordinate ATP. His-118 functions as the Pros-phosphohistidine intermediate in the catalytic mechanism.

This sequence belongs to the NDK family. In terms of assembly, hexamer of two different chains: An and B (A6, A5B, A4B2, A3B3, A2B4, AB5, B6). Interacts with CAPN8. Interacts with AKAP13. Interacts with ITGB1BP1 (via C-terminal domain region). Interacts with BCL2L10. It depends on Mg(2+) as a cofactor. In terms of tissue distribution, expressed in the base region of the oxyntic and pyloric mucosae.

Its subcellular location is the cytoplasm. It is found in the cell projection. The protein resides in the lamellipodium. The protein localises to the ruffle. It localises to the nucleus. It catalyses the reaction a 2'-deoxyribonucleoside 5'-diphosphate + ATP = a 2'-deoxyribonucleoside 5'-triphosphate + ADP. The enzyme catalyses a ribonucleoside 5'-diphosphate + ATP = a ribonucleoside 5'-triphosphate + ADP. The catalysed reaction is ATP + protein L-histidine = ADP + protein N-phospho-L-histidine.. Functionally, major role in the synthesis of nucleoside triphosphates other than ATP. The ATP gamma phosphate is transferred to the NDP beta phosphate via a ping-pong mechanism, using a phosphorylated active-site intermediate. Negatively regulates Rho activity by interacting with AKAP13/LBC. Acts as a transcriptional activator of the MYC gene; binds DNA non-specifically. Binds to both single-stranded guanine- and cytosine-rich strands within the nuclease hypersensitive element (NHE) III(1) region of the MYC gene promoter. Does not bind to duplex NHE III(1). Has G-quadruplex (G4) DNA-binding activity, which is independent of its nucleotide-binding and kinase activity. Binds both folded and unfolded G4 with similar low nanomolar affinities. Stabilizes folded G4s regardless of whether they are prefolded or not. Exhibits histidine protein kinase activity. The chain is Nucleoside diphosphate kinase B (Nme2) from Mus musculus (Mouse).